The following is a 563-amino-acid chain: Proline--tRNA ligase (563 aa).

It belongs to the class-II aminoacyl-tRNA synthetase family. ProS type 1 subfamily. As to quaternary structure, homodimer.

It is found in the cytoplasm. The catalysed reaction is tRNA(Pro) + L-proline + ATP = L-prolyl-tRNA(Pro) + AMP + diphosphate. Functionally, catalyzes the attachment of proline to tRNA(Pro) in a two-step reaction: proline is first activated by ATP to form Pro-AMP and then transferred to the acceptor end of tRNA(Pro). As ProRS can inadvertently accommodate and process non-cognate amino acids such as alanine and cysteine, to avoid such errors it has two additional distinct editing activities against alanine. One activity is designated as 'pretransfer' editing and involves the tRNA(Pro)-independent hydrolysis of activated Ala-AMP. The other activity is designated 'posttransfer' editing and involves deacylation of mischarged Ala-tRNA(Pro). The misacylated Cys-tRNA(Pro) is not edited by ProRS. This chain is Proline--tRNA ligase, found in Persephonella marina (strain DSM 14350 / EX-H1).